The following is a 42-amino-acid chain: Large ribosomal subunit protein bL36 (42 aa).

The protein belongs to the bacterial ribosomal protein bL36 family.

This is Large ribosomal subunit protein bL36 from Wolbachia pipientis subsp. Culex pipiens (strain wPip).